The following is a 501-amino-acid chain: Ectoine/hydroxyectoine transporter (501 aa).

12 consecutive transmembrane segments (helical) span residues 9 to 29, 45 to 65, 86 to 106, 137 to 157, 190 to 210, 220 to 240, 258 to 278, 311 to 331, 343 to 363, 395 to 415, 441 to 461, and 465 to 485; these read PVFY…ATLP, IHFG…LITL, FFTW…VFWG, AFFH…LVIA, LAVI…ILQM, VPTS…TYLI, LGSL…VFIL, WTIF…AFIA, VLGV…AFGG, LPMT…FLVT, IVWG…GGLE, and TASL…MASF.

The protein belongs to the BCCT transporter (TC 2.A.15) family.

It is found in the cell inner membrane. Its function is as follows. Mediates the import of ectoine and hydroxyectoine, which function as osmotic and cold stress protectants. Also has minor uptake activities for the compatible solutes proline and glycine betaine. This chain is Ectoine/hydroxyectoine transporter, found in Virgibacillus pantothenticus.